The following is a 120-amino-acid chain: uncharacterized protein (120 aa).

This is an uncharacterized protein from Escherichia coli O6:H1 (strain CFT073 / ATCC 700928 / UPEC).